The sequence spans 556 residues: Formate--tetrahydrofolate ligase (556 aa).

Residue 65-72 (TPAGEGKT) participates in ATP binding.

The protein belongs to the formate--tetrahydrofolate ligase family.

It carries out the reaction (6S)-5,6,7,8-tetrahydrofolate + formate + ATP = (6R)-10-formyltetrahydrofolate + ADP + phosphate. It functions in the pathway one-carbon metabolism; tetrahydrofolate interconversion. The sequence is that of Formate--tetrahydrofolate ligase from Carboxydothermus hydrogenoformans (strain ATCC BAA-161 / DSM 6008 / Z-2901).